A 467-amino-acid chain; its full sequence is Glutamate--tRNA ligase (467 aa).

Residues 9 to 19 (PSPTGYLHIGG) carry the 'HIGH' region motif. Positions 237–241 (KLSKR) match the 'KMSKS' region motif. Lysine 240 provides a ligand contact to ATP.

It belongs to the class-I aminoacyl-tRNA synthetase family. Glutamate--tRNA ligase type 1 subfamily. Monomer.

It is found in the cytoplasm. It carries out the reaction tRNA(Glu) + L-glutamate + ATP = L-glutamyl-tRNA(Glu) + AMP + diphosphate. Catalyzes the attachment of glutamate to tRNA(Glu) in a two-step reaction: glutamate is first activated by ATP to form Glu-AMP and then transferred to the acceptor end of tRNA(Glu). The chain is Glutamate--tRNA ligase from Xylella fastidiosa (strain M12).